The sequence spans 205 residues: Isochorismatase domain-containing protein 2 (205 aa).

Phosphoserine occurs at positions 7 and 202.

Belongs to the isochorismatase family. As to quaternary structure, interacts with CDKN2A.

The protein resides in the cytoplasm. The protein localises to the nucleus. In Pongo abelii (Sumatran orangutan), this protein is Isochorismatase domain-containing protein 2 (ISOC2).